A 469-amino-acid polypeptide reads, in one-letter code: Cytoplasmic tRNA 2-thiolation protein 2 (469 aa).

The protein belongs to the CTU2/NCS2 family.

It is found in the cytoplasm. It functions in the pathway tRNA modification; 5-methoxycarbonylmethyl-2-thiouridine-tRNA biosynthesis. In terms of biological role, plays a central role in 2-thiolation of mcm(5)S(2)U at tRNA wobble positions of tRNA(Lys), tRNA(Glu) and tRNA(Gln). May act by forming a heterodimer with NCS6 that ligates sulfur from thiocarboxylated URM1 onto the uridine of tRNAs at wobble position. Prior mcm(5) tRNA modification by the elongator complex is required for 2-thiolation. May also be involved in protein urmylation. The protein is Cytoplasmic tRNA 2-thiolation protein 2 of Candida glabrata (strain ATCC 2001 / BCRC 20586 / JCM 3761 / NBRC 0622 / NRRL Y-65 / CBS 138) (Yeast).